Reading from the N-terminus, the 1343-residue chain is DNA-directed RNA polymerase subunit beta (1343 aa).

Belongs to the RNA polymerase beta chain family. As to quaternary structure, the RNAP catalytic core consists of 2 alpha, 1 beta, 1 beta' and 1 omega subunit. When a sigma factor is associated with the core the holoenzyme is formed, which can initiate transcription.

It catalyses the reaction RNA(n) + a ribonucleoside 5'-triphosphate = RNA(n+1) + diphosphate. Functionally, DNA-dependent RNA polymerase catalyzes the transcription of DNA into RNA using the four ribonucleoside triphosphates as substrates. This chain is DNA-directed RNA polymerase subunit beta, found in Shewanella woodyi (strain ATCC 51908 / MS32).